The chain runs to 137 residues: uncharacterized protein (137 aa).

Positions 4-73 (MLTVSEVARK…LEEIADILHL (70 aa)) constitute an HTH merR-type domain. A DNA-binding region (H-T-H motif) is located at residues 8–27 (SEVARKLGLNPQTLYFYERI).

This is an uncharacterized protein from Synechocystis sp. (strain ATCC 27184 / PCC 6803 / Kazusa).